The sequence spans 298 residues: (DL)-glycerol-3-phosphatase 1, mitochondrial (298 aa).

The transit peptide at 1–46 (MLTTPTRFVALRIPFRSSNKIPISIAPSPKVFPRKPVIRVPASLRF) directs the protein to the mitochondrion. Asp77 acts as the Nucleophile in catalysis. Residues Asp77, Asp79, and Asp242 each contribute to the Mg(2+) site. Asp79 serves as the catalytic Proton donor.

It belongs to the HAD-like hydrolase superfamily. DOG/GPP family. It depends on Mg(2+) as a cofactor. As to expression, ubiquitous with highest expression in siliques. Mainly restricted to the meristem of immature flower and vascular elements of the root, shoot, leave, siliqua and developing embryo (at the protein level).

Its subcellular location is the mitochondrion. The enzyme catalyses sn-glycerol 1-phosphate + H2O = glycerol + phosphate. It carries out the reaction sn-glycerol 3-phosphate + H2O = glycerol + phosphate. It catalyses the reaction 5-amino-6-(5-phospho-D-ribitylamino)uracil + H2O = 5-amino-6-(D-ribitylamino)uracil + phosphate. Acts as a glycerol-3-phosphatase with higher stereospecificity for L-glycerol-3-phosphate than DL-glycerol-3-phosphate. Can also dephosphorylate in vitro 5-amino-6-(5-phospho-D-ribitylamino)uracil, also known as ARPP. The polypeptide is (DL)-glycerol-3-phosphatase 1, mitochondrial (Arabidopsis thaliana (Mouse-ear cress)).